Reading from the N-terminus, the 177-residue chain is Large ribosomal subunit protein uL6 (177 aa).

It belongs to the universal ribosomal protein uL6 family. In terms of assembly, part of the 50S ribosomal subunit.

Functionally, this protein binds to the 23S rRNA, and is important in its secondary structure. It is located near the subunit interface in the base of the L7/L12 stalk, and near the tRNA binding site of the peptidyltransferase center. In Albidiferax ferrireducens (strain ATCC BAA-621 / DSM 15236 / T118) (Rhodoferax ferrireducens), this protein is Large ribosomal subunit protein uL6.